We begin with the raw amino-acid sequence, 413 residues long: Tyrosine--tRNA ligase (413 aa).

Position 34 (Y34) interacts with L-tyrosine. A 'HIGH' region motif is present at residues 39–48 (PTSHSLTVGH). Residues Y164 and Q168 each contribute to the L-tyrosine site. The short motif at 225-229 (KFGKS) is the 'KMSKS' region element. Residue K228 coordinates ATP. The S4 RNA-binding domain occupies 347–413 (ILLVDALVQT…GKKNNALIVF (67 aa)).

It belongs to the class-I aminoacyl-tRNA synthetase family. TyrS type 1 subfamily. As to quaternary structure, homodimer.

The protein localises to the cytoplasm. The enzyme catalyses tRNA(Tyr) + L-tyrosine + ATP = L-tyrosyl-tRNA(Tyr) + AMP + diphosphate + H(+). Functionally, catalyzes the attachment of tyrosine to tRNA(Tyr) in a two-step reaction: tyrosine is first activated by ATP to form Tyr-AMP and then transferred to the acceptor end of tRNA(Tyr). The sequence is that of Tyrosine--tRNA ligase from Aster yellows witches'-broom phytoplasma (strain AYWB).